We begin with the raw amino-acid sequence, 286 residues long: MIAITGATGQLGHYVIESLMKTVPASQIVAIVRNPAKAQALAAQGITVRQADYGDEAALTSALQGVEKLLLISSSEVGQRAPQHRNVINAAKAAGVKFIAYTSLLHADTSPLGLADEHIETEKMLADSGIVYTLLRNGWYSENYLASAPAALEHGVFIGAAGDGKIASATRADYAAAAARVISEAGHEGKVYELAGDSAWTLTQLAAELTKQSGKQVTYQNLSEADFAAALKSVGLPDGLADMLADSDVGASKGGLFDDSKTLSKLIGHPTTTLAESVSHLFNVNN.

NADP(+)-binding positions include 6 to 11 (GATGQL), Arg-33, 73 to 75 (SSS), 138 to 143 (GWYSEN), and Arg-171.

This sequence belongs to the NmrA-type oxidoreductase family. In terms of assembly, monomer.

The enzyme catalyses a quinone + NADH + H(+) = a quinol + NAD(+). The catalysed reaction is a quinone + NADPH + H(+) = a quinol + NADP(+). Quinone oxidoreductase that may play some additional role beyond quinone reduction. Potential redox sensor protein. Overexpression induces retardation of growth. The chain is Quinone oxidoreductase 2 (qorB) from Escherichia coli (strain K12).